The primary structure comprises 365 residues: Peptide chain release factor 2 (365 aa).

Q252 is subject to N5-methylglutamine.

Belongs to the prokaryotic/mitochondrial release factor family. In terms of processing, methylated by PrmC. Methylation increases the termination efficiency of RF2.

It is found in the cytoplasm. Its function is as follows. Peptide chain release factor 2 directs the termination of translation in response to the peptide chain termination codons UGA and UAA. The chain is Peptide chain release factor 2 from Aeromonas hydrophila subsp. hydrophila (strain ATCC 7966 / DSM 30187 / BCRC 13018 / CCUG 14551 / JCM 1027 / KCTC 2358 / NCIMB 9240 / NCTC 8049).